The sequence spans 157 residues: Transcription elongation factor GreB (157 aa).

Belongs to the GreA/GreB family. GreB subfamily.

Its function is as follows. Necessary for efficient RNA polymerase transcription elongation past template-encoded arresting sites. The arresting sites in DNA have the property of trapping a certain fraction of elongating RNA polymerases that pass through, resulting in locked ternary complexes. Cleavage of the nascent transcript by cleavage factors such as GreA or GreB allows the resumption of elongation from the new 3'terminus. GreB releases sequences of up to 9 nucleotides in length. This Salmonella typhi protein is Transcription elongation factor GreB.